Here is a 773-residue protein sequence, read N- to C-terminus: Lon protease homolog 2, peroxisomal (773 aa).

Residues 9-198 (LPVIVVDSGV…MCEKWMQMQR (190 aa)) form the Lon N-terminal domain. Residue 336–343 (GPPGIGKT) participates in ATP binding. The region spanning 587–766 (PLPPGVCFGL…EDVIEAMMEK (180 aa)) is the Lon proteolytic domain. Active-site residues include Ser672 and Lys715. Positions 771-773 (AKL) match the Microbody targeting signal motif.

Belongs to the peptidase S16 family.

It is found in the peroxisome matrix. The catalysed reaction is Hydrolysis of proteins in presence of ATP.. Functionally, ATP-dependent serine protease that mediates the selective degradation of misfolded and unassembled polypeptides in the peroxisomal matrix. Necessary for type 2 peroxisome targeting signal (PTS2)-containing protein processing and facilitates peroxisome matrix protein import. This chain is Lon protease homolog 2, peroxisomal, found in Caenorhabditis briggsae.